The chain runs to 117 residues: Large ribosomal subunit protein bL19 (117 aa).

This sequence belongs to the bacterial ribosomal protein bL19 family.

This protein is located at the 30S-50S ribosomal subunit interface and may play a role in the structure and function of the aminoacyl-tRNA binding site. This is Large ribosomal subunit protein bL19 from Azobacteroides pseudotrichonymphae genomovar. CFP2.